We begin with the raw amino-acid sequence, 509 residues long: Proto-oncogene tyrosine-protein kinase LCK (509 aa).

Residue G2 is the site of N-myristoyl glycine attachment. The segment at 2–72 is interactions with CD4 and CD8; sequence GCVCSSNPED…DNLVIALHSY (71 aa). S-palmitoyl cysteine attachment occurs at residues C3 and C5. The 61-residue stretch at 61 to 121 folds into the SH3 domain; that stretch reads LQDNLVIALH…PFNFVAKANS (61 aa). K99 participates in a covalent cross-link: Glycyl lysine isopeptide (Lys-Gly) (interchain with G-Cter in ubiquitin). At S102 the chain carries Phosphoserine. The SH2 domain occupies 127–224; the sequence is WFFKNLSRKD…GLCTKLSRPC (98 aa). Residues 154–242 are interaction with PTPRH; that stretch reads RESESTAGSF…WWEDEWEVPR (89 aa). Phosphothreonine is present on T159. S162 is subject to Phosphoserine. Y192 bears the Phosphotyrosine mark. S194 is subject to Phosphoserine. A Protein kinase domain is found at 245–498; the sequence is LKLVERLGAG…YLRSVLDDFF (254 aa). Residues 251 to 259 and K273 contribute to the ATP site; that span reads LGAGQFGEV. Residue K276 forms a Glycyl lysine isopeptide (Lys-Gly) (interchain with G-Cter in ubiquitin) linkage. D364 functions as the Proton acceptor in the catalytic mechanism. Phosphotyrosine; by autocatalysis is present on Y394. The residue at position 505 (Y505) is a Phosphotyrosine.

Belongs to the protein kinase superfamily. Tyr protein kinase family. SRC subfamily. As to quaternary structure, binds to the cytoplasmic domain of cell surface receptors, such as AXL, CD2, CD4, CD5, CD8, CD44, CD45 and CD122. Also binds to effector molecules, such as PI4K, VAV1, RASA1, FYB1 and to other protein kinases including CDK1, RAF1, ZAP70 and SYK. Binds to phosphatidylinositol 3'-kinase (PI3K) from T-lymphocytes through its SH3 domain and to the tyrosine phosphorylated form of KHDRBS1/p70 through its SH2 domain. Interacts with SQSTM1. Interacts with phosphorylated LIME1. Interacts with CBLB and PTPRH. Interacts with RUNX3. Forms a signaling complex with EPHA1, PTK2B and PI3-KINASE; upon activation by EFNA1 which may regulate T-lymphocytes migration. Associates with ZAP70 and RHOH; these interactions allow LCK-mediated RHOH and CD3 subunit phosphorylations in presence of a functional ZAP70. Interacts with CEACAM1 (via cytoplasmic domain); mediates CEACAM1 phosphorylation resulting in PTPN6 recruitment that dephosphorylates TCR stimulation-induced CD247 and ZAP70. Interacts with FYB2. Interacts with CD160. Interacts with CD48. In terms of processing, autophosphorylated on Tyr-394, increasing enzymatic activity, this site is dephosphorylated by PTN22. Phosphorylated on Tyr-505 by CSK, decreasing activity. Dephosphorylated by PTPRC/CD45. Dephosphorylation at Tyr-394 by PTPN2 negatively regulates T-cells differentiation. Dephosphorylation at Tyr-394 by DUSP22 negatively regulates T-cell receptor signaling. Myristoylation is required prior to palmitoylation. Post-translationally, palmitoylation regulates association with the plasma membrane and could be mediated by ZDHHC2. In terms of processing, 'Lys-63'-linked ubiquitinated at Lys-99 and Lys-276 by UBR2; this modification is required for autophosphorylation at Tyr-394.

The protein resides in the cell membrane. Its subcellular location is the cytoplasm. The protein localises to the cytosol. The enzyme catalyses L-tyrosyl-[protein] + ATP = O-phospho-L-tyrosyl-[protein] + ADP + H(+). With respect to regulation, the relative activities of the inhibitory tyrosine-protein kinase CSK and the activating tyrosine-protein phosphatase PTPRC/CD45 determine the level of LCK activity. These interactions allow rapid and efficient activation of LCK in response to TCR stimulation. In terms of biological role, non-receptor tyrosine-protein kinase that plays an essential role in the selection and maturation of developing T-cells in the thymus and in the function of mature T-cells. Plays a key role in T-cell antigen receptor (TCR)-linked signal transduction pathways. Constitutively associated with the cytoplasmic portions of the CD4 and CD8 surface receptors. Association of the TCR with a peptide antigen-bound MHC complex facilitates the interaction of CD4 and CD8 with MHC class II and class I molecules, respectively, thereby recruiting the associated LCK protein to the vicinity of the TCR/CD3 complex. LCK then phosphorylates tyrosine residues within the immunoreceptor tyrosine-based activation motifs (ITAM) of the cytoplasmic tails of the TCR-gamma chains and CD3 subunits, initiating the TCR/CD3 signaling pathway. Once stimulated, the TCR recruits the tyrosine kinase ZAP70, that becomes phosphorylated and activated by LCK. Following this, a large number of signaling molecules are recruited, ultimately leading to lymphokine production. LCK also contributes to signaling by other receptor molecules. Associates directly with the cytoplasmic tail of CD2, which leads to hyperphosphorylation and activation of LCK. Also plays a role in the IL2 receptor-linked signaling pathway that controls the T-cell proliferative response. Binding of IL2 to its receptor results in increased activity of LCK. Is expressed at all stages of thymocyte development and is required for the regulation of maturation events that are governed by both pre-TCR and mature alpha beta TCR. Phosphorylates other substrates including RUNX3, PTK2B/PYK2, the microtubule-associated protein MAPT, RHOH or TYROBP. Interacts with UNC119; this interaction plays a crucial role in activation of LCK. The polypeptide is Proto-oncogene tyrosine-protein kinase LCK (Lck) (Rattus norvegicus (Rat)).